The following is a 221-amino-acid chain: MNMNKYIDHTLLKPDATQEMIDKLCQEAREHDFMSVCVNPYWVKRSAELLAGSDVKVCTVIGFPLGASTIESKAAETRDAIANGATEVDMVLNVGALKSGDLETVKKDIAAVKQAAGDILLKVILETCLLTEEEKVVACKLSVEAGADYVKTSTGFSTGGATVEDIALMRKTVGPNVGVKASGGVRDGETAVAMIEAGASRIGTSSGVSIVTGAKTTGSGY.

Asp-89 acts as the Proton donor/acceptor in catalysis. The Schiff-base intermediate with acetaldehyde role is filled by Lys-151. The active-site Proton donor/acceptor is the Lys-180.

It belongs to the DeoC/FbaB aldolase family. DeoC type 1 subfamily.

The protein localises to the cytoplasm. The catalysed reaction is 2-deoxy-D-ribose 5-phosphate = D-glyceraldehyde 3-phosphate + acetaldehyde. It functions in the pathway carbohydrate degradation; 2-deoxy-D-ribose 1-phosphate degradation; D-glyceraldehyde 3-phosphate and acetaldehyde from 2-deoxy-alpha-D-ribose 1-phosphate: step 2/2. Catalyzes a reversible aldol reaction between acetaldehyde and D-glyceraldehyde 3-phosphate to generate 2-deoxy-D-ribose 5-phosphate. This is Deoxyribose-phosphate aldolase from Brevibacillus brevis (strain 47 / JCM 6285 / NBRC 100599).